Reading from the N-terminus, the 234-residue chain is Synaptogyrin-1 (234 aa).

M1 carries the post-translational modification N-acetylmethionine. At 1–23 (MEGGAYGAGKAGGAFDPYTLVRQ) the chain is on the cytoplasmic side. An MARVEL domain is found at 20-173 (LVRQPHTILR…QAVLAFQRYQ (154 aa)). A helical membrane pass occupies residues 24-44 (PHTILRVVSWVFSIVVFGSIV). Residues 45–71 (NEGYLNNPEEEEEFCIYNRNPNACSYG) are Lumenal-facing. Residues 72–92 (VTVGVLAFLTCLVYLALDVYF) form a helical membrane-spanning segment. Residues 93–104 (PQISSVKDRKKA) lie on the Cytoplasmic side of the membrane. The chain crosses the membrane as a helical span at residues 105-125 (VLSDIGVSAFWAFFWFVGFCF). Residues 126–148 (LANQWQVSKPKDNPLNEGTDAAR) lie on the Lumenal side of the membrane. The chain crosses the membrane as a helical span at residues 149–169 (AAIAFSFFSIFTWAGQAVLAF). Over 170 to 234 (QRYQIGADSA…EPQGYQSQGY (65 aa)) the chain is Cytoplasmic. A disordered region spans residues 201–234 (EPSAGSDPTGMGGTYQHPANAFDAEPQGYQSQGY).

Belongs to the synaptogyrin family. As to expression, nervous system (at protein level).

It is found in the cytoplasmic vesicle. The protein localises to the secretory vesicle. It localises to the synaptic vesicle membrane. The protein resides in the melanosome. May play a role in regulated exocytosis. Modulates the localization of synaptophysin/SYP into synaptic-like microvesicles and may therefore play a role in synaptic-like microvesicle formation and/or maturation. Involved in the regulation of short-term and long-term synaptic plasticity. This is Synaptogyrin-1 from Rattus norvegicus (Rat).